Reading from the N-terminus, the 305-residue chain is Popeye domain-containing protein 3 (305 aa).

An N-linked (GlcNAc...) asparagine glycan is attached at asparagine 4. The next 3 membrane-spanning stretches (helical) occupy residues 34 to 54 (SILFVVGFMGGSGFSGLLYVF), 55 to 75 (SLLGLGFLCSSVWAWLDVCAA), and 77 to 99 (IFSWNFILFAICFVQFIYVTYQV). The tract at residues 273-305 (PETPPVPPPRRLQRRSSGRPRPGVPNCSSPRKQ) is disordered. N-linked (GlcNAc...) asparagine glycosylation is present at asparagine 298.

It belongs to the popeye family. In terms of tissue distribution, expressed first preferentially in atrium and later also in the subepicardial compact layer of the ventricles.

The protein localises to the membrane. Its function is as follows. May play a role in the maintenance of heart function mediated, at least in part, through cAMP-binding. May play a role in the regulation of KCNK2-mediated current amplitude. The sequence is that of Popeye domain-containing protein 3 (POPDC3) from Gallus gallus (Chicken).